The chain runs to 313 residues: Ribosomal RNA small subunit methyltransferase H (313 aa).

S-adenosyl-L-methionine-binding positions include 35 to 37 (GGH), aspartate 55, phenylalanine 79, aspartate 101, and glutamine 108.

This sequence belongs to the methyltransferase superfamily. RsmH family.

The protein localises to the cytoplasm. The enzyme catalyses cytidine(1402) in 16S rRNA + S-adenosyl-L-methionine = N(4)-methylcytidine(1402) in 16S rRNA + S-adenosyl-L-homocysteine + H(+). Functionally, specifically methylates the N4 position of cytidine in position 1402 (C1402) of 16S rRNA. This Erwinia tasmaniensis (strain DSM 17950 / CFBP 7177 / CIP 109463 / NCPPB 4357 / Et1/99) protein is Ribosomal RNA small subunit methyltransferase H.